Consider the following 256-residue polypeptide: Imidazole glycerol phosphate synthase subunit HisF (256 aa).

Residues Asp-12 and Asp-131 contribute to the active site.

This sequence belongs to the HisA/HisF family. As to quaternary structure, heterodimer of HisH and HisF.

The protein localises to the cytoplasm. It carries out the reaction 5-[(5-phospho-1-deoxy-D-ribulos-1-ylimino)methylamino]-1-(5-phospho-beta-D-ribosyl)imidazole-4-carboxamide + L-glutamine = D-erythro-1-(imidazol-4-yl)glycerol 3-phosphate + 5-amino-1-(5-phospho-beta-D-ribosyl)imidazole-4-carboxamide + L-glutamate + H(+). The protein operates within amino-acid biosynthesis; L-histidine biosynthesis; L-histidine from 5-phospho-alpha-D-ribose 1-diphosphate: step 5/9. Functionally, IGPS catalyzes the conversion of PRFAR and glutamine to IGP, AICAR and glutamate. The HisF subunit catalyzes the cyclization activity that produces IGP and AICAR from PRFAR using the ammonia provided by the HisH subunit. This Micrococcus luteus (strain ATCC 4698 / DSM 20030 / JCM 1464 / CCM 169 / CCUG 5858 / IAM 1056 / NBRC 3333 / NCIMB 9278 / NCTC 2665 / VKM Ac-2230) (Micrococcus lysodeikticus) protein is Imidazole glycerol phosphate synthase subunit HisF.